Consider the following 1001-residue polypeptide: E3 ubiquitin-protein ligase etc-1 (1001 aa).

One can recognise an IQ domain in the interval 28-57; it reads QEKAARKVQKFWRGHRVQHNQRLLFRAEFD. Residues 66 to 115 are a coiled coil; sequence LEETIKMAQLLVNFYETNKDEERLVMTLSELVKLKTSDKEFEKRIRETQR. The region spanning 658–1001 is the HECT domain; that stretch reads KVNDLKSMVR…INSGAGFELA (344 aa). Cysteine 969 serves as the catalytic Glycyl thioester intermediate.

As to quaternary structure, interacts with ify-1 and cyb-1.

It carries out the reaction S-ubiquitinyl-[E2 ubiquitin-conjugating enzyme]-L-cysteine + [acceptor protein]-L-lysine = [E2 ubiquitin-conjugating enzyme]-L-cysteine + N(6)-ubiquitinyl-[acceptor protein]-L-lysine.. Its pathway is protein modification; protein ubiquitination. In terms of biological role, E3 ubiquitin-protein ligase that accepts ubiquitin from E2 ubiquitin-conjugating enzymes, such as ubc-18, in the form of a thioester and then directly transfers the ubiquitin to targeted substrates. Ubiquitinates ify-1 and cyb-1 targeting them for degradation in post-meiotic embryos. The chain is E3 ubiquitin-protein ligase etc-1 from Caenorhabditis elegans.